A 401-amino-acid chain; its full sequence is Tryptophan synthase beta chain (401 aa).

Lys-91 carries the N6-(pyridoxal phosphate)lysine modification.

The protein belongs to the TrpB family. In terms of assembly, tetramer of two alpha and two beta chains. Pyridoxal 5'-phosphate serves as cofactor.

The enzyme catalyses (1S,2R)-1-C-(indol-3-yl)glycerol 3-phosphate + L-serine = D-glyceraldehyde 3-phosphate + L-tryptophan + H2O. The protein operates within amino-acid biosynthesis; L-tryptophan biosynthesis; L-tryptophan from chorismate: step 5/5. The beta subunit is responsible for the synthesis of L-tryptophan from indole and L-serine. The chain is Tryptophan synthase beta chain from Lactococcus lactis subsp. cremoris (strain MG1363).